The following is a 752-amino-acid chain: Cytosolic phospholipase A2 (752 aa).

A phospholipid binding region spans residues 1-178 (MSFIDPYQHI…MKKLLGPKKS (178 aa)). At S2 the chain carries Phosphoserine. A C2 domain is found at 6 to 122 (PYQHIIVEHQ…KVGEKKEVPF (117 aa)). 7 residues coordinate Ca(2+): D40, T41, D43, N65, D93, A94, and N95. The PLA2c domain occupies 140-740 (SCPDLRFSMA…SNVEARKFFN (601 aa)). S228 (nucleophile) is an active-site residue. Position 268 is a phosphothreonine (T268). The disordered stretch occupies residues 427–457 (KHIVSNDSSDSDDEAQGPKGTENEDAEREYQ). 3 positions are modified to phosphoserine: S434, S435, and S437. Residue S505 is modified to Phosphoserine; by MAPK. 2 positions are modified to phosphoserine: S511 and S515. K541 is covalently cross-linked (Glycyl lysine isopeptide (Lys-Gly) (interchain with G-Cter in SUMO2)). D549 serves as the catalytic Proton acceptor. K606 is covalently cross-linked (Glycyl lysine isopeptide (Lys-Gly) (interchain with G-Cter in SUMO2)). Residues S727 and S729 each carry the phosphoserine modification.

In terms of assembly, interacts with KAT5. Post-translationally, phosphorylated at both Ser-505 and Ser-727 in response to mitogenic stimuli. In brain tissue, expressed in low levels in olfactory mitral and granule cells, in hippocampal pyramidal cells and in dentate and cerebellar granule cells.

It localises to the cytoplasm. It is found in the golgi apparatus membrane. Its subcellular location is the nucleus envelope. The catalysed reaction is a 1,2-diacyl-sn-glycero-3-phosphocholine + H2O = a 1-acyl-sn-glycero-3-phosphocholine + a fatty acid + H(+). It catalyses the reaction a 1-O-alkyl-2-acyl-sn-glycero-3-phosphocholine + H2O = a 1-O-alkyl-sn-glycero-3-phosphocholine + a fatty acid + H(+). It carries out the reaction a 1-acyl-sn-glycero-3-phosphocholine + H2O = sn-glycerol 3-phosphocholine + a fatty acid + H(+). The enzyme catalyses 1-hexadecanoyl-2-(5Z,8Z,11Z,14Z-eicosatetraenoyl)-sn-glycero-3-phosphocholine + H2O = 1-hexadecanoyl-sn-glycero-3-phosphocholine + (5Z,8Z,11Z,14Z)-eicosatetraenoate + H(+). The catalysed reaction is 1,2-di-(5Z,8Z,11Z,14Z-eicosatetraenoyl)-sn-glycero-3-phosphocholine + H2O = 1-(5Z,8Z,11Z,14Z-eicosatetraenoyl)-sn-glycero-3-phosphocholine + (5Z,8Z,11Z,14Z)-eicosatetraenoate + H(+). It catalyses the reaction 1-octadecanoyl-2-(5Z,8Z,11Z,14Z-eicosatetraenoyl)-sn-glycero-3-phosphocholine + H2O = 1-octadecanoyl-sn-glycero-3-phosphocholine + (5Z,8Z,11Z,14Z)-eicosatetraenoate + H(+). It carries out the reaction 1-hexadecanoyl-2-(9Z,12Z-octadecadienoyl)-sn-glycero-3-phosphocholine + H2O = (9Z,12Z)-octadecadienoate + 1-hexadecanoyl-sn-glycero-3-phosphocholine + H(+). The enzyme catalyses 1-octadecanoyl-2-(9Z,12Z,15Z-octadecatrienoyl)-sn-glycero-3-phosphocholine + H2O = (9Z,12Z,15Z)-octadecatrienoate + 1-octadecanoyl-sn-glycero-3-phosphocholine + H(+). The catalysed reaction is 1-(5Z,8Z,11Z,14Z-eicosatetraenoyl)-2-hexadecanoyl-sn-glycero-3-phosphocholine + H2O = 1-(5Z,8Z,11Z,14Z-eicosatetraenoyl)-sn-glycero-3-phosphocholine + hexadecanoate + H(+). It catalyses the reaction 1-O-hexadecyl-2-(5Z,8Z,11Z,14Z)-eicosatetraenoyl-sn-glycero-3-phosphocholine + H2O = 1-O-hexadecyl-sn-glycero-3-phosphocholine + (5Z,8Z,11Z,14Z)-eicosatetraenoate + H(+). It carries out the reaction 1,2-di-(9Z-octadecenoyl)-sn-glycero-3-phospho-(1'-sn-glycerol) + H2O = 1-(9Z-octadecenoyl)-sn-glycero-3-phospho-(1'-sn-glycerol) + (9Z)-octadecenoate + H(+). The enzyme catalyses 1-octadecanoyl-2-(5Z,8Z,11Z,14Z-eicosatetraenoyl)-sn-glycero-3-phosphate + H2O = 1-octadecanoyl-sn-glycero-3-phosphate + (5Z,8Z,11Z,14Z)-eicosatetraenoate + H(+). The catalysed reaction is 1-hexadecanoyl-sn-glycero-3-phosphocholine + H2O = sn-glycerol 3-phosphocholine + hexadecanoate + H(+). It catalyses the reaction 2-(prostaglandin E2)-sn-glycero-3-phosphoethanolamine + H2O = sn-glycero-3-phosphoethanolamine + prostaglandin E2 + H(+). It carries out the reaction 2-[(15S)-hydroxy-(5Z,8Z,11Z,13E)-eicosatetraenoyl]-sn-glycero-3-phosphocholine + H2O = (15S)-hydroxy-(5Z,8Z,11Z,13E)-eicosatetraenoate + sn-glycerol 3-phosphocholine + H(+). The enzyme catalyses 2-[(15R)-hydroxy-(5Z,8Z,11Z,13E)-eicosatetraenoyl]-sn-glycero-3-phosphocholine + H2O = (15R)-hydroxy-(5Z,8Z,11Z,13E)-eicosatetraenoate + sn-glycerol 3-phosphocholine + H(+). The catalysed reaction is 2-(prostaglandin E2)-sn-glycero-3-phosphocholine + H2O = prostaglandin E2 + sn-glycerol 3-phosphocholine + H(+). It catalyses the reaction 2-[(11R)-hydroxy-(5Z,8Z,12E,14Z)-eicosatetraenoyl]-sn-glycero-3-phosphocholine + H2O = (11R)-hydroxy-(5Z,8Z,12E,14Z)-eicosatetraenoate + sn-glycerol 3-phosphocholine + H(+). It carries out the reaction 1-(5Z,8Z,11Z,14Z-eicosatetraenoyl)-2-O-hexadecyl-sn-glycero-3-phosphocholine + H2O = 2-O-hexadecyl-sn-glycero-3-phosphocholine + (5Z,8Z,11Z,14Z)-eicosatetraenoate + H(+). The enzyme catalyses 1-octadecanoyl-2-(5Z,8Z,11Z,14Z-eicosatetraenoyl)-sn-glycero-3-phosphocholine + glycerol = 1-(5Z,8Z,11Z,14Z-eicosatetraenoyl)-glycerol + 1-octadecanoyl-sn-glycero-3-phosphocholine. The catalysed reaction is 1-octadecanoyl-2-(9Z,12Z,15Z-octadecatrienoyl)-sn-glycero-3-phosphocholine + glycerol = 1-(9Z,12Z,15Z-octadecatrienoyl)-glycerol + 1-octadecanoyl-sn-glycero-3-phosphocholine. Its pathway is lipid metabolism; arachidonate metabolism. It participates in membrane lipid metabolism; glycerophospholipid metabolism. It functions in the pathway lipid metabolism; prostaglandin biosynthesis. The protein operates within lipid metabolism; leukotriene B4 biosynthesis. Activated by cytosolic calcium, which is necessary for binding to membrane lipids. Activated by phosphorylation in response to mitogenic stimuli. Its function is as follows. Has primarily calcium-dependent phospholipase and lysophospholipase activities, with a major role in membrane lipid remodeling and biosynthesis of lipid mediators of the inflammatory response. Plays an important role in embryo implantation and parturition through its ability to trigger prostanoid production. Preferentially hydrolyzes the ester bond of the fatty acyl group attached at sn-2 position of phospholipids (phospholipase A2 activity). Selectively hydrolyzes sn-2 arachidonoyl group from membrane phospholipids, providing the precursor for eicosanoid biosynthesis via the cyclooxygenase pathway. In an alternative pathway of eicosanoid biosynthesis, hydrolyzes sn-2 fatty acyl chain of eicosanoid lysophopholipids to release free bioactive eicosanoids. Hydrolyzes the ester bond of the fatty acyl group attached at sn-1 position of phospholipids (phospholipase A1 activity) only if an ether linkage rather than an ester linkage is present at the sn-2 position. This hydrolysis is not stereospecific. Has calcium-independent phospholipase A2 and lysophospholipase activities in the presence of phosphoinositides. Has O-acyltransferase activity. Catalyzes the transfer of fatty acyl chains from phospholipids to a primary hydroxyl group of glycerol (sn-1 or sn-3), potentially contributing to monoacylglycerol synthesis. This is Cytosolic phospholipase A2 (Pla2g4a) from Rattus norvegicus (Rat).